The chain runs to 244 residues: Phosphoadenosine 5'-phosphosulfate reductase (244 aa).

Cys239 functions as the Nucleophile; cysteine thiosulfonate intermediate in the catalytic mechanism.

The protein belongs to the PAPS reductase family. CysH subfamily.

It localises to the cytoplasm. The catalysed reaction is [thioredoxin]-disulfide + sulfite + adenosine 3',5'-bisphosphate + 2 H(+) = [thioredoxin]-dithiol + 3'-phosphoadenylyl sulfate. It functions in the pathway sulfur metabolism; hydrogen sulfide biosynthesis; sulfite from sulfate: step 3/3. Catalyzes the formation of sulfite from phosphoadenosine 5'-phosphosulfate (PAPS) using thioredoxin as an electron donor. The sequence is that of Phosphoadenosine 5'-phosphosulfate reductase from Shigella flexneri.